The primary structure comprises 233 residues: tRNA (guanine-N(7)-)-methyltransferase (233 aa).

Positions 1–21 (MTEESHPLRGAGNFFGRRHGK) are disordered. Residues glutamate 64, glutamate 89, aspartate 116, and aspartate 138 each contribute to the S-adenosyl-L-methionine site. Aspartate 138 is an active-site residue. Residues lysine 142, aspartate 174, and 212-215 (TRYE) contribute to the substrate site.

It belongs to the class I-like SAM-binding methyltransferase superfamily. TrmB family.

The enzyme catalyses guanosine(46) in tRNA + S-adenosyl-L-methionine = N(7)-methylguanosine(46) in tRNA + S-adenosyl-L-homocysteine. The protein operates within tRNA modification; N(7)-methylguanine-tRNA biosynthesis. Its function is as follows. Catalyzes the formation of N(7)-methylguanine at position 46 (m7G46) in tRNA. This is tRNA (guanine-N(7)-)-methyltransferase from Brucella anthropi (strain ATCC 49188 / DSM 6882 / CCUG 24695 / JCM 21032 / LMG 3331 / NBRC 15819 / NCTC 12168 / Alc 37) (Ochrobactrum anthropi).